Here is a 65-residue protein sequence, read N- to C-terminus: Large ribosomal subunit protein bL35 (65 aa).

The interval 1–26 (MPKIKTVRGAAKRFKKTASGGFKRKQ) is disordered. Residues 10–26 (AAKRFKKTASGGFKRKQ) are compositionally biased toward basic residues.

This sequence belongs to the bacterial ribosomal protein bL35 family.

This Actinobacillus succinogenes (strain ATCC 55618 / DSM 22257 / CCUG 43843 / 130Z) protein is Large ribosomal subunit protein bL35.